The sequence spans 436 residues: MPKPVIAIVGRPNVGKSTIFNRIVGERVSIVEDIPGVTRDRIYSAGEWLNHEFNIIDTGGIDIGDEPFLTQIRQQAEVAIDEADVIIFMTNGRDGVTAADEEVAKILYRSNKPVVLAVNKVDNPEMRSDIYDFYALGFGEPFPISGTHGLGLGDLLDEAAQHFPKIEEDGYDEDTIRFSLIGRPNVGKSSLVNALLGQERVIVSNVAGTTRDAVDTPYSKDGKDYVIIDTAGMRKKGKVYESTEKYSVLRALRAIERSDVVLVVLDGEEGIIEQDKKIAGYAHDSGRAVVIVVNKWDAVKKDEKTMKAFEENIRAHFQFLDYAPIVFLSAKTRKRTQTLIPVIDEVNESHSIRIQTNVLNDVIMDAVAMNPTPTHNGSRLKIFYATQVAVKPPTFVVFVNDPELLHFSYERFLKNRLRESFGFVGTPIHIIARARD.

EngA-type G domains follow at residues 4–167 and 176–351; these read PVIA…PKIE and IRFS…ESHS. GTP contacts are provided by residues 10-17, 57-61, 119-122, 182-189, 229-233, and 294-297; these read GRPNVGKS, DTGGI, NKVD, DTAGM, and NKWD. One can recognise a KH-like domain in the interval 352 to 436; it reads IRIQTNVLND…PIHIIARARD (85 aa).

This sequence belongs to the TRAFAC class TrmE-Era-EngA-EngB-Septin-like GTPase superfamily. EngA (Der) GTPase family. In terms of assembly, associates with the 50S ribosomal subunit.

Functionally, GTPase that plays an essential role in the late steps of ribosome biogenesis. This Bacillus cereus (strain ATCC 10987 / NRS 248) protein is GTPase Der.